Here is a 234-residue protein sequence, read N- to C-terminus: uncharacterized protein (234 aa).

10–34 (VVTGASSGIGASIAETLANQGVKVV) provides a ligand contact to NADP(+). Serine 143 is a substrate binding site. Tyrosine 156 (proton acceptor) is an active-site residue.

It belongs to the short-chain dehydrogenases/reductases (SDR) family.

This is an uncharacterized protein from Staphylococcus saprophyticus subsp. saprophyticus (strain ATCC 15305 / DSM 20229 / NCIMB 8711 / NCTC 7292 / S-41).